A 427-amino-acid polypeptide reads, in one-letter code: Serine--tRNA ligase (427 aa).

230 to 232 (TSE) is an L-serine binding site. ATP is bound at residue 261–263 (RSE). L-serine is bound at residue Glu-284. 348 to 351 (EISS) contacts ATP. An L-serine-binding site is contributed by Ser-384.

This sequence belongs to the class-II aminoacyl-tRNA synthetase family. Type-1 seryl-tRNA synthetase subfamily. In terms of assembly, homodimer. The tRNA molecule binds across the dimer.

It localises to the cytoplasm. The catalysed reaction is tRNA(Ser) + L-serine + ATP = L-seryl-tRNA(Ser) + AMP + diphosphate + H(+). It catalyses the reaction tRNA(Sec) + L-serine + ATP = L-seryl-tRNA(Sec) + AMP + diphosphate + H(+). It functions in the pathway aminoacyl-tRNA biosynthesis; selenocysteinyl-tRNA(Sec) biosynthesis; L-seryl-tRNA(Sec) from L-serine and tRNA(Sec): step 1/1. Catalyzes the attachment of serine to tRNA(Ser). Is also able to aminoacylate tRNA(Sec) with serine, to form the misacylated tRNA L-seryl-tRNA(Sec), which will be further converted into selenocysteinyl-tRNA(Sec). The protein is Serine--tRNA ligase of Desulforapulum autotrophicum (strain ATCC 43914 / DSM 3382 / VKM B-1955 / HRM2) (Desulfobacterium autotrophicum).